The primary structure comprises 195 residues: dITP/XTP pyrophosphatase (195 aa).

8–13 (SGNAGK) contributes to the substrate binding site. Residues Glu-38 and Asp-67 each contribute to the Mg(2+) site. Catalysis depends on Asp-67, which acts as the Proton acceptor. Substrate-binding positions include Ser-68, 146–149 (FGYD), Lys-169, and 174–175 (HR).

The protein belongs to the HAM1 NTPase family. In terms of assembly, homodimer. Requires Mg(2+) as cofactor.

It carries out the reaction XTP + H2O = XMP + diphosphate + H(+). The enzyme catalyses dITP + H2O = dIMP + diphosphate + H(+). It catalyses the reaction ITP + H2O = IMP + diphosphate + H(+). Pyrophosphatase that catalyzes the hydrolysis of nucleoside triphosphates to their monophosphate derivatives, with a high preference for the non-canonical purine nucleotides XTP (xanthosine triphosphate), dITP (deoxyinosine triphosphate) and ITP. Seems to function as a house-cleaning enzyme that removes non-canonical purine nucleotides from the nucleotide pool, thus preventing their incorporation into DNA/RNA and avoiding chromosomal lesions. The protein is dITP/XTP pyrophosphatase of Parasynechococcus marenigrum (strain WH8102).